The primary structure comprises 961 residues: Translation initiation factor IF-2 (961 aa).

The span at 146–158 shows a compositional bias: polar residues; that stretch reads PSVPNKTLTTTPH. Residues 146 to 373 are disordered; the sequence is PSVPNKTLTT…KTTSQVTTQP (228 aa). Positions 163-176 are enriched in basic and acidic residues; sequence NHSEKDVLESHDSS. The span at 177–187 shows a compositional bias: low complexity; the sequence is NKNIKQSSSQN. The span at 230–239 shows a compositional bias: basic and acidic residues; that stretch reads SEEKNVDIQQ. Composition is skewed to polar residues over residues 241–285 and 301–310; these read EIPS…TAPH and YQGQNRNNFI. Residues 355 to 364 show a composition bias toward basic residues; the sequence is NRGRKRHKQK. A tr-type G domain is found at 460–627; it reads RRPPVVTIMG…LLALQTDILE (168 aa). Residues 469 to 476 form a G1 region; the sequence is GHVDHGKT. 469–476 is a binding site for GTP; it reads GHVDHGKT. Residues 494-498 form a G2 region; sequence GITQH. The segment at 515-518 is G3; the sequence is DTPG. Residues 515 to 519 and 569 to 572 each bind GTP; these read DTPGH and NKMD. The segment at 569–572 is G4; that stretch reads NKMD. The interval 605-607 is G5; the sequence is SAK.

Belongs to the TRAFAC class translation factor GTPase superfamily. Classic translation factor GTPase family. IF-2 subfamily.

The protein localises to the cytoplasm. Functionally, one of the essential components for the initiation of protein synthesis. Protects formylmethionyl-tRNA from spontaneous hydrolysis and promotes its binding to the 30S ribosomal subunits. Also involved in the hydrolysis of GTP during the formation of the 70S ribosomal complex. In Lawsonia intracellularis (strain PHE/MN1-00), this protein is Translation initiation factor IF-2.